A 256-amino-acid chain; its full sequence is 5-keto-4-deoxy-D-glucarate aldolase (256 aa).

Residue His-50 is the Proton acceptor of the active site. Gln-151 lines the substrate pocket. Glu-153 contributes to the Mg(2+) binding site. Substrate is bound by residues Ser-178 and Asp-179. Asp-179 contacts Mg(2+).

Belongs to the HpcH/HpaI aldolase family. KDGluc aldolase subfamily. In terms of assembly, homohexamer; trimer of dimers. Mg(2+) is required as a cofactor.

It catalyses the reaction 5-dehydro-4-deoxy-D-glucarate = 2-hydroxy-3-oxopropanoate + pyruvate. The enzyme catalyses 2-dehydro-3-deoxy-D-glucarate = 2-hydroxy-3-oxopropanoate + pyruvate. Its pathway is carbohydrate acid metabolism; galactarate degradation; D-glycerate from galactarate: step 2/3. Catalyzes the reversible retro-aldol cleavage of both 5-keto-4-deoxy-D-glucarate and 2-keto-3-deoxy-D-glucarate to pyruvate and tartronic semialdehyde. This Klebsiella pneumoniae subsp. pneumoniae (strain ATCC 700721 / MGH 78578) protein is 5-keto-4-deoxy-D-glucarate aldolase.